Consider the following 287-residue polypeptide: Ribosomal RNA small subunit methyltransferase A (287 aa).

Positions 28, 30, 55, 77, 103, and 123 each coordinate S-adenosyl-L-methionine.

This sequence belongs to the class I-like SAM-binding methyltransferase superfamily. rRNA adenine N(6)-methyltransferase family. RsmA subfamily.

It is found in the cytoplasm. The enzyme catalyses adenosine(1518)/adenosine(1519) in 16S rRNA + 4 S-adenosyl-L-methionine = N(6)-dimethyladenosine(1518)/N(6)-dimethyladenosine(1519) in 16S rRNA + 4 S-adenosyl-L-homocysteine + 4 H(+). Its function is as follows. Specifically dimethylates two adjacent adenosines (A1518 and A1519) in the loop of a conserved hairpin near the 3'-end of 16S rRNA in the 30S particle. May play a critical role in biogenesis of 30S subunits. The protein is Ribosomal RNA small subunit methyltransferase A of Rhodopseudomonas palustris (strain BisB5).